The chain runs to 273 residues: MSDMHSLLIAAILGVVEGLTEFLPVSSTGHMIIVGHLLGFEGDTAKTFEVVIQLGSILAVVVMFWRRLFGLIGIHFGRPLQHEGESKGRLTLIHILLGMIPAVVLGLLFHDTIKSLFNPINVMYALVVGGLLLIAAECLKPKEPRAPGLDDMTYRQAFMIGCFQCLALWPGFSRSGATISGGMLMGVSRYAASEFSFLLAVPMMMGATALDLYKSWGFLTNGDIPMFAVGFITAFVVALIAIKTFLQLIKRISFIPFAIYRFIVAAAVYVVFF.

Helical transmembrane passes span 6–26 (SLLI…LPVS), 45–65 (AKTF…VMFW), 90–110 (LTLI…LLFH), 116–136 (LFNP…LIAA), 190–210 (YAAS…ATAL), 222–242 (GDIP…LIAI), and 252–272 (ISFI…YVVF).

Belongs to the UppP family.

The protein resides in the cell inner membrane. The enzyme catalyses di-trans,octa-cis-undecaprenyl diphosphate + H2O = di-trans,octa-cis-undecaprenyl phosphate + phosphate + H(+). Catalyzes the dephosphorylation of undecaprenyl diphosphate (UPP). Confers resistance to bacitracin. The chain is Undecaprenyl-diphosphatase from Escherichia coli O7:K1 (strain IAI39 / ExPEC).